The sequence spans 1150 residues: DNA polymerase (1150 aa).

A disordered region spans residues 1 to 53 (MSLVQGHGTSGLFTEPPNPINQQESSGPSLPAQDAAQAFASSPRAGATSTIVN).

Belongs to the DNA polymerase type-B family. In terms of assembly, heterodimer with the terminal protein; this heterodimer binds to bp 9 to 18 of the genome. Forms a complex with viral pTP, DBP and hosts NFIA and POU2F1/OCT1 for initiation of replication.

Its subcellular location is the host nucleus. The enzyme catalyses DNA(n) + a 2'-deoxyribonucleoside 5'-triphosphate = DNA(n+1) + diphosphate. In terms of biological role, eukaryotic-type DNA polymerase involved in viral genomic replication. DNA synthesis is protein primed, and acts in a strand displacement replication. Assembles in complex with viral pTP, DBP, host NFIA and host POU2F1/OCT1 on viral origin of replication. The polymerase covalently transfers dCMP onto pTP, thereby initiating complementary strand synthesis. This Canis lupus familiaris (Dog) protein is DNA polymerase.